The chain runs to 484 residues: MGEASSSSGHPRQNPHVLGYGFHGAMPNSLPSANLFEQQGGANYFGELEEALMQQVATLRRTQQTATTTSTLHHGDTTPFSTTATAAATARPPPTLDIFPSWPMRSLHTPKEGSNVTADTTDSESSSKNNSNQNASSDQHVLVGDMAGQFDQIPQQEQHKKMATNSPTHSSKTGKALDPKTMRRLAQNREAARKSRLRKKAYIQQLESSKLKLAQMEQDIHRARSQGLLLGAPGGNTSSGAAMFDVDYARWLEEDSQRMAELHGGLHAHLPDSDLRAIVDDTLTHYDHLFNLKGMAAKADVFHLITGMWATPAERCFLWMGGFRPSELLKTLTPQLDPLTEQQVVGICNLQQSSQQAEEALSQGLDQLHQSLAETVAGGSPLDDPNVGSFMGHMAIALGQLSNLEGFVIQADNLRQQTIHQMHRILTVRQAARCFLAIGEYHNRLRALSSLWASRPREILVADEGNCGELSIAAHPSESQYSAF.

Positions 1–11 (MGEASSSSGHP) are enriched in polar residues. Disordered stretches follow at residues 1 to 22 (MGEA…GYGF), 84 to 137 (ATAA…NASS), and 155 to 181 (QQEQ…DPKT). Low complexity predominate over residues 123–137 (SESSSKNNSNQNASS). Polar residues predominate over residues 163-173 (ATNSPTHSSKT). The 45-residue stretch at 178 to 222 (DPKTMRRLAQNREAARKSRLRKKAYIQQLESSKLKLAQMEQDIHR) folds into the bZIP domain. The interval 180-200 (KTMRRLAQNREAARKSRLRKK) is basic motif. The interval 206-220 (LESSKLKLAQMEQDI) is leucine-zipper. Residues 241–455 (AAMFDVDYAR…RALSSLWASR (215 aa)) form the DOG1 domain.

The protein belongs to the bZIP family. As to quaternary structure, interacts with NPR1/NH1 and NPR3/NH3.

The protein resides in the nucleus. Functionally, transcriptional regulator involved in defense response. This chain is Transcription factor TGAL4, found in Oryza sativa subsp. japonica (Rice).